Reading from the N-terminus, the 452-residue chain is Probable M18 family aminopeptidase 1 (452 aa).

Zn(2+) contacts are provided by histidine 93, histidine 168, and histidine 427.

The protein belongs to the peptidase M18 family. Zn(2+) serves as cofactor.

The polypeptide is Probable M18 family aminopeptidase 1 (apeA) (Thermotoga neapolitana).